A 734-amino-acid chain; its full sequence is Photosystem I P700 chlorophyll a apoprotein A2 (734 aa).

Helical transmembrane passes span 46–69 (IFASHFGQLAIIFLWTSGNLFHVA), 135–158 (LYTGALFLLFLSTLSLIASWLHLQ), 175–199 (LNHHLSGLFGVSSLAWTGHLVHVAI), 273–291 (MAHHHLAIAFIFLIAGHMY), 330–353 (IHFQLGLALASLGVITSLVAQHMY), 369–395 (AALYTHHQYIAGFIMTGAFAHGAIFFI), 417–439 (AIISHLSWASLFLGFHTLGLYVH), and 517–535 (FLVHHAIALGLHTTTLILV). Positions 559 and 568 each coordinate [4Fe-4S] cluster. The next 2 membrane-spanning stretches (helical) occupy residues 575–596 (AFYLAVFWMLNTIGWVTFYWHW) and 643–665 (LSVWAWMFLFGHLVWATGFMFLI). Positions 654, 662, and 670 each coordinate chlorophyll a. Residue Trp-671 coordinates phylloquinone. Residues 707 to 727 (LVGLAHFSVGYIFTYAAFLIA) form a helical membrane-spanning segment.

Belongs to the PsaA/PsaB family. As to quaternary structure, the PsaA/B heterodimer binds the P700 chlorophyll special pair and subsequent electron acceptors. PSI consists of a core antenna complex that captures photons, and an electron transfer chain that converts photonic excitation into a charge separation. The eukaryotic PSI reaction center is composed of at least 11 subunits. It depends on P700 is a chlorophyll a/chlorophyll a' dimer, A0 is one or more chlorophyll a, A1 is one or both phylloquinones and FX is a shared 4Fe-4S iron-sulfur center. as a cofactor.

Its subcellular location is the plastid. The protein resides in the chloroplast thylakoid membrane. The catalysed reaction is reduced [plastocyanin] + hnu + oxidized [2Fe-2S]-[ferredoxin] = oxidized [plastocyanin] + reduced [2Fe-2S]-[ferredoxin]. In terms of biological role, psaA and PsaB bind P700, the primary electron donor of photosystem I (PSI), as well as the electron acceptors A0, A1 and FX. PSI is a plastocyanin-ferredoxin oxidoreductase, converting photonic excitation into a charge separation, which transfers an electron from the donor P700 chlorophyll pair to the spectroscopically characterized acceptors A0, A1, FX, FA and FB in turn. Oxidized P700 is reduced on the lumenal side of the thylakoid membrane by plastocyanin. This Hordeum vulgare (Barley) protein is Photosystem I P700 chlorophyll a apoprotein A2.